A 319-amino-acid polypeptide reads, in one-letter code: Guanosine ABC transporter permease protein NupQ (319 aa).

A run of 9 helical transmembrane segments spans residues 6-26, 39-59, 65-85, 99-119, 159-179, 204-224, 235-255, 257-277, and 282-302; these read ILSI…LTAL, IGLE…NLFF, AAAP…FSLI, VSGV…VKLI, ILAI…PFGL, IGVM…ASTI, GQGF…IGAL, AALF…LPLF, and NVYM…GFIG.

It belongs to the binding-protein-dependent transport system permease family. As to quaternary structure, the complex is composed of two ATP-binding proteins (NupO), two transmembrane proteins (NupP and NupQ) and a solute-binding protein (NupN).

It is found in the cell membrane. Part of an ABC transporter complex involved in the uptake of guanosine. Responsible for the translocation of the substrate across the membrane. May be a nucleoside transporter of broad specificity but with various affinities for different substrates. In Bacillus subtilis (strain 168), this protein is Guanosine ABC transporter permease protein NupQ.